Consider the following 152-residue polypeptide: CASP-like protein 5C3 (152 aa).

Residues 1 to 17 (MVEVPGSVGTTASLSLR) lie on the Cytoplasmic side of the membrane. Residues 18–38 (LGQMVLAFGSLLFMTIGVRFY) traverse the membrane as a helical segment. The Extracellular portion of the chain corresponds to 39–42 (QFTA). Residues 43-63 (FCYLVTIMSLAIPWNLTLAMV) traverse the membrane as a helical segment. At 64-78 (DIYCVILQQPFQKPR) the chain is on the cytoplasmic side. The helical transmembrane segment at 79-99 (ILLAISIGDWVVSVLALASAS) threads the bilayer. Topologically, residues 100–128 (SAASVVDILRSNESSCPPTICNRYQFAAT) are extracellular. N-linked (GlcNAc...) asparagine glycosylation is present at N111. The helical transmembrane segment at 129–149 (LAFLTWFLSLSSSLFNLWLLP) threads the bilayer. Residues 150-152 (SLI) lie on the Cytoplasmic side of the membrane.

The protein belongs to the Casparian strip membrane proteins (CASP) family. In terms of assembly, homodimer and heterodimers. Expressed in the floral organ abscission zone and flower buds.

The protein localises to the cell membrane. The polypeptide is CASP-like protein 5C3 (Arabidopsis thaliana (Mouse-ear cress)).